A 163-amino-acid polypeptide reads, in one-letter code: MPSFDIVSEVDLQEARNAVDNASREVESRFDFRNVEASFELNDASKTIKVLSESDFQVNQLLDILRAKLLKRGIEGSSLDVPENIVHSGKTWFVEAKLKQGIESATQKKIVKMIKDSKLKVQAQIQGDEIRVTGKSRDDLQAVMAVVRGGDLGQPFQFKNFRD.

Belongs to the YajQ family.

Nucleotide-binding protein. The chain is Nucleotide-binding protein YajQ from Escherichia coli O127:H6 (strain E2348/69 / EPEC).